The primary structure comprises 802 residues: Outer membrane usher protein PefC (802 aa).

The N-terminal stretch at 1 to 24 (MSFHHRVFKLSALSLALFSHLSFA) is a signal peptide. Cysteine 782 and cysteine 801 are disulfide-bonded.

This sequence belongs to the fimbrial export usher family.

It is found in the cell outer membrane. Its function is as follows. Involved in the export and assembly of FimA fimbrial subunits across the outer membrane. This Salmonella typhimurium (strain LT2 / SGSC1412 / ATCC 700720) protein is Outer membrane usher protein PefC (pefC).